The chain runs to 251 residues: Probable transcriptional regulatory protein SYO3AOP1_0685 (251 aa).

Belongs to the TACO1 family.

It is found in the cytoplasm. This Sulfurihydrogenibium sp. (strain YO3AOP1) protein is Probable transcriptional regulatory protein SYO3AOP1_0685.